A 383-amino-acid polypeptide reads, in one-letter code: Oxysterol-binding protein-related protein 4B (383 aa).

This sequence belongs to the OSBP family. As to expression, expressed in stems and flowers.

May be involved in the transport of sterols. The protein is Oxysterol-binding protein-related protein 4B (ORP4B) of Arabidopsis thaliana (Mouse-ear cress).